The chain runs to 386 residues: MKLSDFDFDLPSELIAQYPSSKRDHSDLLIAATPPIKTKFYNIIDYLKEGDLLVFNNSKVIKAKLNLEKNRPLSKLAYRDKFEGDMECRTAVYTNVREDSSTGSTYKLPLEVELEKRSNITINLNQRLSNNCWSAFAKPARRLNIGDEFHFDNHKVIIVEKLAIGEIKVKFELDDISVFEFLDKYGEMPLPLYIRHHEAQKSNNERYQNIYSSIEGSVAAPTAGLHFTNDILNKLKAKNIQTTFLTLHVGAGTFLPVKTENIHEHKMHTEYCSITPDTARLINKAKQEKQRIIAVGTTTLRTLESSCNNGTVKACDFETDIFITPGFKFQTADILLTNFHFPKSTLFMLICAFAGFKEMHKLYKYAIKEKMRFFSYGDATLLYRKI.

Belongs to the QueA family. In terms of assembly, monomer.

The protein localises to the cytoplasm. It catalyses the reaction 7-aminomethyl-7-carbaguanosine(34) in tRNA + S-adenosyl-L-methionine = epoxyqueuosine(34) in tRNA + adenine + L-methionine + 2 H(+). It functions in the pathway tRNA modification; tRNA-queuosine biosynthesis. Functionally, transfers and isomerizes the ribose moiety from AdoMet to the 7-aminomethyl group of 7-deazaguanine (preQ1-tRNA) to give epoxyqueuosine (oQ-tRNA). The polypeptide is S-adenosylmethionine:tRNA ribosyltransferase-isomerase (Rickettsia canadensis (strain McKiel)).